We begin with the raw amino-acid sequence, 447 residues long: UDP-N-acetylmuramoyl-L-alanyl-D-glutamate--2,6-diaminopimelate ligase (447 aa).

Thr21 contributes to the UDP-N-acetyl-alpha-D-muramoyl-L-alanyl-D-glutamate binding site. 74-80 (GTNGKTT) contacts ATP. UDP-N-acetyl-alpha-D-muramoyl-L-alanyl-D-glutamate-binding positions include 117 to 118 (TT), Ser144, Gln150, and Arg152. N6-carboxylysine is present on Lys184. Residues Arg340, 364–367 (DNPR), Gly415, and Glu419 each bind meso-2,6-diaminopimelate. The Meso-diaminopimelate recognition motif signature appears at 364 to 367 (DNPR).

Belongs to the MurCDEF family. MurE subfamily. Requires Mg(2+) as cofactor. In terms of processing, carboxylation is probably crucial for Mg(2+) binding and, consequently, for the gamma-phosphate positioning of ATP.

Its subcellular location is the cytoplasm. The enzyme catalyses UDP-N-acetyl-alpha-D-muramoyl-L-alanyl-D-glutamate + meso-2,6-diaminopimelate + ATP = UDP-N-acetyl-alpha-D-muramoyl-L-alanyl-gamma-D-glutamyl-meso-2,6-diaminopimelate + ADP + phosphate + H(+). The protein operates within cell wall biogenesis; peptidoglycan biosynthesis. Its function is as follows. Catalyzes the addition of meso-diaminopimelic acid to the nucleotide precursor UDP-N-acetylmuramoyl-L-alanyl-D-glutamate (UMAG) in the biosynthesis of bacterial cell-wall peptidoglycan. The sequence is that of UDP-N-acetylmuramoyl-L-alanyl-D-glutamate--2,6-diaminopimelate ligase from Helicobacter pylori (strain J99 / ATCC 700824) (Campylobacter pylori J99).